The following is a 152-amino-acid chain: Deoxyuridine 5'-triphosphate nucleotidohydrolase (152 aa).

Substrate is bound by residues Arg71–Gly73, Asn84, Leu88–Asp90, and Met98.

This sequence belongs to the dUTPase family. Requires Mg(2+) as cofactor.

The catalysed reaction is dUTP + H2O = dUMP + diphosphate + H(+). The protein operates within pyrimidine metabolism; dUMP biosynthesis; dUMP from dCTP (dUTP route): step 2/2. Its function is as follows. This enzyme is involved in nucleotide metabolism: it produces dUMP, the immediate precursor of thymidine nucleotides and it decreases the intracellular concentration of dUTP so that uracil cannot be incorporated into DNA. This chain is Deoxyuridine 5'-triphosphate nucleotidohydrolase, found in Coxiella burnetii (strain Dugway 5J108-111).